The chain runs to 261 residues: uncharacterized protein (261 aa).

5 helical membrane-spanning segments follow: residues 38 to 58 (FIYL…ITLL), 134 to 154 (YTLM…LALI), 163 to 183 (ILIN…TYVL), 195 to 215 (YMGL…LFFL), and 219 to 239 (HKSV…CLKV).

It is found in the membrane. This is an uncharacterized protein from Dictyostelium discoideum (Social amoeba).